Consider the following 162-residue polypeptide: AP-1 complex subunit sigma-1 (162 aa).

This sequence belongs to the adaptor complexes small subunit family. In terms of assembly, adaptor protein complex 1 (AP-1) is a heterotetramer composed of two large adaptins (gamma-type subunit apl4 and beta-type subunit apl2), a medium adaptin (mu-type subunit apm1) and a small adaptin (sigma-type subunit aps1). AP-1 interacts with clathrin.

Its subcellular location is the cytoplasm. It localises to the nucleus. The protein localises to the cytoplasmic vesicle. The protein resides in the clathrin-coated vesicle membrane. It is found in the endosome. Its subcellular location is the golgi apparatus. Its function is as follows. Component of the AP-1 complex which links clathrin to receptors in coated vesicles. Clathrin-associated protein complexes are believed to interact with the cytoplasmic tails of membrane proteins, leading to their selection and concentration. This is AP-1 complex subunit sigma-1 (vas2) from Schizosaccharomyces pombe (strain 972 / ATCC 24843) (Fission yeast).